Reading from the N-terminus, the 265-residue chain is Reduced viability upon starvation protein 161 (265 aa).

One can recognise a BAR domain in the interval 15–239 (HSVIIKNVDK…LDQQSRDDYA (225 aa)). Residues 126–193 (YFKEIEEAIK…NQLKTELPQL (68 aa)) adopt a coiled-coil conformation.

The protein resides in the cytoplasm. Its subcellular location is the cytoskeleton. In terms of biological role, component of a cytoskeletal structure that is required for the formation of endocytic vesicles at the plasma membrane level. This is Reduced viability upon starvation protein 161 (RVS161) from Saccharomyces cerevisiae (strain ATCC 204508 / S288c) (Baker's yeast).